A 126-amino-acid polypeptide reads, in one-letter code: uncharacterized protein (126 aa).

Transmembrane regions (helical) follow at residues 21–43 (LIVWNIFVNLRLGVFLLLVRIFS) and 48–70 (SVTFLGLFRTLLPVGRICFLLLL).

The protein resides in the membrane. This is an uncharacterized protein from Saccharomyces cerevisiae (strain ATCC 204508 / S288c) (Baker's yeast).